The following is a 154-amino-acid chain: uncharacterized protein (154 aa).

Positions 14–146 (AMNLYRVFAR…LIVLLKKAGI (133 aa)) constitute an HTH marR-type domain. A DNA-binding region (H-T-H motif) is located at residues 60 to 83 (LQQIGSRLLLVSGNVTYVIDKLER).

This is an uncharacterized protein from Bacillus subtilis (strain 168).